Here is a 399-residue protein sequence, read N- to C-terminus: Developmentally-regulated G-protein 2 (399 aa).

One can recognise an OBG-type G domain in the interval 63–288 (GRVALIGFPS…LLARMWDEMG (226 aa)). GTP contacts are provided by residues 69–76 (GFPSVGKS), 115–119 (DLPGI), and 246–249 (NKID). Positions 288–366 (GLVRVYSKPQ…EDEDVVQIVK (79 aa)) constitute a TGS domain. Residues 372–399 (EGGRGRFKSHSNAPARIADREKKAPLKQ) are disordered. Over residues 388–399 (IADREKKAPLKQ) the composition is skewed to basic and acidic residues.

Belongs to the TRAFAC class OBG-HflX-like GTPase superfamily. OBG GTPase family.

It localises to the cytoplasm. In terms of biological role, binds GDP and GTP, and has low GTPase activity. The sequence is that of Developmentally-regulated G-protein 2 (DRG2) from Arabidopsis thaliana (Mouse-ear cress).